The primary structure comprises 374 residues: Alcohol dehydrogenase S chain (374 aa).

S2 bears the N-acetylserine mark. Residues C47, H68, C98, C101, C104, C112, and C174 each coordinate Zn(2+). NAD(+)-binding positions include 199-204 (GLGGVG), D223, K228, 292-294 (VGV), and R369.

The protein belongs to the zinc-containing alcohol dehydrogenase family. Class-I subfamily. Dimer of identical or non-identical chains of two types (E and S) coded by 2 separate genes at different loci. Zn(2+) is required as a cofactor.

It is found in the cytoplasm. It carries out the reaction a primary alcohol + NAD(+) = an aldehyde + NADH + H(+). The catalysed reaction is a secondary alcohol + NAD(+) = a ketone + NADH + H(+). This Equus caballus (Horse) protein is Alcohol dehydrogenase S chain.